Here is a 110-residue protein sequence, read N- to C-terminus: HTH-type transcriptional regulator TnrA (110 aa).

Residues 13–81 (VISIGIVSEL…TAEILKDMRK (69 aa)) enclose the HTH merR-type domain. Positions 16-35 (IGIVSELTGLSVRQIRYYEE) form a DNA-binding region, H-T-H motif.

As to quaternary structure, homodimer. Under conditions of nitrogen excess, TnrA forms a stable complex with feedback-inhibited GlnA. Interacts with GlnK-AmtB complex.

The protein resides in the cell membrane. With respect to regulation, under conditions of nitrogen excess, the DNA-binding activity is inhibited by the formation of a stable complex with feedback-inhibited GlnA. The presence of glutamine and AMP increases the inhibitory activity of glutamine synthetase by more than 1000-fold. Transcription regulator that actives the transcription of genes required for nitrogen assimilation such as nrgAB (ammonium transport), nasABCDEF (nitrate/nitrite assimilation), ureABC (urea degradation) and gabP (GABA transport), during nitrogen limitation. Also represses glnRA and gltAB in the absence of ammonium. On the contrary of the MerR members, which require longer DNA sites for high-affinity binding, TnrA requires a DNA sequence of 17 nucleotides as minimal binding site. This Bacillus subtilis (strain 168) protein is HTH-type transcriptional regulator TnrA.